Here is a 150-residue protein sequence, read N- to C-terminus: Arginine repressor (150 aa).

This sequence belongs to the ArgR family.

The protein localises to the cytoplasm. It participates in amino-acid biosynthesis; L-arginine biosynthesis [regulation]. Its function is as follows. Regulates arginine biosynthesis genes. The polypeptide is Arginine repressor (Clostridium botulinum (strain Eklund 17B / Type B)).